The primary structure comprises 248 residues: MSFVVIIPARYASTRLPGKPLVDINGKPMIVHVLERARESGAERIIVATDHEDVARAVEVAGGEVCMTRADHQSGTERLAEVVEKCAFSDDTVIVNVQGDEPMIPATIIRQVADNLAQRQVGMATLAVPIHNAEEAFNPNAVKVVLDAEGYALYFSRATIPWDRDRFAKDLETVGDNFLRHLGIYGYRAGFIRRYVTWQPSPLEHIEMLEQLRVLWYGEKIHVAVAQEVPGTGVDTPEDLKRVRAEMR.

It belongs to the KdsB family.

It localises to the cytoplasm. The catalysed reaction is 3-deoxy-alpha-D-manno-oct-2-ulosonate + CTP = CMP-3-deoxy-beta-D-manno-octulosonate + diphosphate. It participates in nucleotide-sugar biosynthesis; CMP-3-deoxy-D-manno-octulosonate biosynthesis; CMP-3-deoxy-D-manno-octulosonate from 3-deoxy-D-manno-octulosonate and CTP: step 1/1. Its pathway is bacterial outer membrane biogenesis; lipopolysaccharide biosynthesis. Functionally, activates KDO (a required 8-carbon sugar) for incorporation into bacterial lipopolysaccharide in Gram-negative bacteria. In Escherichia coli O6:H1 (strain CFT073 / ATCC 700928 / UPEC), this protein is 3-deoxy-manno-octulosonate cytidylyltransferase.